Here is a 130-residue protein sequence, read N- to C-terminus: Sirohydrochlorin cobaltochelatase (130 aa).

His-12 functions as the Proton acceptor in the catalytic mechanism. His-12 is a binding site for Co(2+). His-12 contributes to the Ni(2+) binding site. Substrate is bound by residues Glu-48 and 73 to 78; that span reads LASGVH. Co(2+) is bound at residue His-78. His-78 contacts Ni(2+).

It belongs to the CbiX family. CbiXS subfamily. As to quaternary structure, homotetramer; dimer of dimers.

It carries out the reaction Co-sirohydrochlorin + 2 H(+) = sirohydrochlorin + Co(2+). The enzyme catalyses Ni-sirohydrochlorin + 2 H(+) = sirohydrochlorin + Ni(2+). The protein operates within cofactor biosynthesis; adenosylcobalamin biosynthesis; cob(II)yrinate a,c-diamide from sirohydrochlorin (anaerobic route): step 1/10. In terms of biological role, catalyzes the insertion of Co(2+) into sirohydrochlorin as part of the anaerobic pathway to cobalamin biosynthesis (Potential). Involved in the biosynthesis of the unique nickel-containing tetrapyrrole coenzyme F430, the prosthetic group of methyl-coenzyme M reductase (MCR), which plays a key role in methanogenesis and anaerobic methane oxidation. Catalyzes the insertion of Ni(2+) into sirohydrochlorin to yield Ni-sirohydrochlorin. This is Sirohydrochlorin cobaltochelatase from Methanosarcina acetivorans (strain ATCC 35395 / DSM 2834 / JCM 12185 / C2A).